Reading from the N-terminus, the 358-residue chain is 3-dehydroquinate synthase (358 aa).

Residues 105 to 109, 129 to 130, Lys142, Lys151, and 169 to 172 each bind NAD(+); these read GVVGD, TT, and TLKT. 3 residues coordinate Zn(2+): Glu184, His245, and His262.

This sequence belongs to the sugar phosphate cyclases superfamily. Dehydroquinate synthase family. It depends on NAD(+) as a cofactor. Requires Co(2+) as cofactor. The cofactor is Zn(2+).

It is found in the cytoplasm. It catalyses the reaction 7-phospho-2-dehydro-3-deoxy-D-arabino-heptonate = 3-dehydroquinate + phosphate. The protein operates within metabolic intermediate biosynthesis; chorismate biosynthesis; chorismate from D-erythrose 4-phosphate and phosphoenolpyruvate: step 2/7. Catalyzes the conversion of 3-deoxy-D-arabino-heptulosonate 7-phosphate (DAHP) to dehydroquinate (DHQ). The sequence is that of 3-dehydroquinate synthase from Enterococcus faecalis (strain ATCC 47077 / OG1RF).